The primary structure comprises 605 residues: Protein MLN51 homolog (605 aa).

Composition is skewed to acidic residues over residues 1–16 (MAPDGVEDSDYESDPD) and 30–40 (SDDDEDDEEAD). Disordered stretches follow at residues 1–88 (MAPD…DGDY), 101–132 (NNDKTIVAGNGTDDSAATDLVDGEEQKKKEPF), 151–275 (DAAS…GRPP), 350–380 (TAQTTSHGRGVPPHGQVLYQQSPNQGDKVSS), and 544–605 (YQAD…SFSK). Position 30 is a phosphoserine (Ser-30). A compositionally biased stretch (basic and acidic residues) spans 41–57 (DHDKLRAAIQIHSDEHS). Residues 75–87 (SYGDDDDEEEDGD) are compositionally biased toward acidic residues. Positions 166-192 (QSRDERKWGHDKFEEMNTQKQQYDRRT) are enriched in basic and acidic residues. Composition is skewed to polar residues over residues 214–228 (NNSKEFTGNGHQNQF), 247–265 (NGNQAPSVQTKQSQNSSVE), and 367–380 (LYQQSPNQGDKVSS). Residues 552–567 (PSSAGSSSQENSSNNP) show a composition bias toward low complexity. The segment covering 578–593 (VTNNGNSQRSNSNPNK) has biased composition (polar residues).

This sequence belongs to the CASC3 family. In terms of assembly, weakly interacts with EIF4A3.

It is found in the nucleus. Its subcellular location is the cytoplasm. In terms of biological role, core component of the splicing-dependent multiprotein exon junction complex (EJC) deposited at splice junctions on mRNAs. The EJC is a dynamic structure consisting of core proteins and several peripheral nuclear and cytoplasmic associated factors that join the complex only transiently either during EJC assembly or during subsequent mRNA metabolism. The EJC marks the position of the exon-exon junction in the mature mRNA for the gene expression machinery and the core components remain bound to spliced mRNAs throughout all stages of mRNA metabolism thereby influencing downstream processes including nuclear mRNA export, subcellular mRNA localization, translation efficiency and nonsense-mediated mRNA decay (NMD). Stimulates the ATPase and RNA-helicase activities of EIF4A3. In Arabidopsis thaliana (Mouse-ear cress), this protein is Protein MLN51 homolog.